Reading from the N-terminus, the 184-residue chain is ATP synthase subunit b, chloroplastic (184 aa).

A helical transmembrane segment spans residues 29–49; that stretch reads INIINLGIVIGLLVYLGEGVL.

The protein belongs to the ATPase B chain family. As to quaternary structure, F-type ATPases have 2 components, F(1) - the catalytic core - and F(0) - the membrane proton channel. F(1) has five subunits: alpha(3), beta(3), gamma(1), delta(1), epsilon(1). F(0) has four main subunits: a(1), b(1), b'(1) and c(10-14). The alpha and beta chains form an alternating ring which encloses part of the gamma chain. F(1) is attached to F(0) by a central stalk formed by the gamma and epsilon chains, while a peripheral stalk is formed by the delta, b and b' chains.

Its subcellular location is the plastid. It localises to the chloroplast thylakoid membrane. Functionally, f(1)F(0) ATP synthase produces ATP from ADP in the presence of a proton or sodium gradient. F-type ATPases consist of two structural domains, F(1) containing the extramembraneous catalytic core and F(0) containing the membrane proton channel, linked together by a central stalk and a peripheral stalk. During catalysis, ATP synthesis in the catalytic domain of F(1) is coupled via a rotary mechanism of the central stalk subunits to proton translocation. Component of the F(0) channel, it forms part of the peripheral stalk, linking F(1) to F(0). This is ATP synthase subunit b, chloroplastic from Psilotum nudum (Whisk fern).